Reading from the N-terminus, the 509-residue chain is Zinc finger protein Aiolos (509 aa).

Residues 1-85 form a disordered region; the sequence is MEDIKPNVEL…PMGNAEEPEI (85 aa). Residues 10–20 show a composition bias toward polar residues; the sequence is LKSTQEQSVPT. A Phosphothreonine modification is found at T20. Basic and acidic residues predominate over residues 56-72; sequence DSMKVKDEYSERDENVL. Glycyl lysine isopeptide (Lys-Gly) (interchain with G-Cter in SUMO2) cross-links involve residues K61, K73, and K100. 3 C2H2-type zinc fingers span residues 118-140, 146-168, and 174-196; these read MNCD…KRSH, FQCN…IKLH, and FKCH…LRTH. The segment at 202-224 adopts a C2H2-type 4; atypical zinc-finger fold; that stretch reads YKCEFCGRSYKQRSSLEEHKERC. K245 participates in a covalent cross-link: Glycyl lysine isopeptide (Lys-Gly) (interchain with G-Cter in SUMO2). T326 carries the post-translational modification Phosphothreonine. Positions 365 to 421 are disordered; the sequence is HLPEKSLPSERGLSPTNSGHDSTDTDSNHEERQNHIYQQNPMVPPRARNGMPLLKEG. Position 378 is a phosphoserine (S378). A compositionally biased stretch (basic and acidic residues) spans 385–398; it reads DSTDTDSNHEERQN. The C2H2-type 5 zinc-finger motif lies at 452–474; the sequence is YRCDHCRVLFLDYVMFTIHMGCH. The mediates homodimerization and heterodimerization stretch occupies residues 452–504; it reads YRCDHCRVLFLDYVMFTIHMGCHGFRDPFECNMCGYRSHDRYEFSSHIARGEH. The C2H2-type 6; atypical zinc finger occupies 480–504; that stretch reads FECNMCGYRSHDRYEFSSHIARGEH.

This sequence belongs to the Ikaros C2H2-type zinc-finger protein family. Homodimer. Heterodimer with other IKAROS family members. Interacts with IKZF4 and IKZF5. Interacts with IKZF1. Interacts with HRAS. Interacts with FOXP3; this interaction may be required for silencing target genes and regulating the suppressive activity of FOXP3-positive regulatory T-cells (Treg). Interacts with BCL21L; this interaction blocks the anti-apoptotic role of BCL21L. Associates with histone deacetylase complexes containing HDAC1, MTA2 and SIN3A.

It localises to the nucleus. The protein resides in the cytoplasm. Functionally, transcription factor that plays an important role in the regulation of lymphocyte differentiation. Plays an essential role in regulation of B-cell differentiation, proliferation and maturation to an effector state. Involved in regulating BCL2 expression and controlling apoptosis in T-cells in an IL2-dependent manner. The sequence is that of Zinc finger protein Aiolos (IKZF3) from Bos taurus (Bovine).